The primary structure comprises 240 residues: UDP-2,3-diacylglucosamine hydrolase (240 aa).

Mn(2+) contacts are provided by D7, H9, D40, N78, and H113. Residue 78–79 (NR) participates in substrate binding. 4 residues coordinate substrate: D121, S159, K166, and H194. Positions 194 and 196 each coordinate Mn(2+).

Belongs to the LpxH family. The cofactor is Mn(2+).

The protein resides in the cell inner membrane. The catalysed reaction is UDP-2-N,3-O-bis[(3R)-3-hydroxytetradecanoyl]-alpha-D-glucosamine + H2O = 2-N,3-O-bis[(3R)-3-hydroxytetradecanoyl]-alpha-D-glucosaminyl 1-phosphate + UMP + 2 H(+). Its pathway is glycolipid biosynthesis; lipid IV(A) biosynthesis; lipid IV(A) from (3R)-3-hydroxytetradecanoyl-[acyl-carrier-protein] and UDP-N-acetyl-alpha-D-glucosamine: step 4/6. Hydrolyzes the pyrophosphate bond of UDP-2,3-diacylglucosamine to yield 2,3-diacylglucosamine 1-phosphate (lipid X) and UMP by catalyzing the attack of water at the alpha-P atom. Involved in the biosynthesis of lipid A, a phosphorylated glycolipid that anchors the lipopolysaccharide to the outer membrane of the cell. This is UDP-2,3-diacylglucosamine hydrolase from Pseudomonas putida (strain ATCC 47054 / DSM 6125 / CFBP 8728 / NCIMB 11950 / KT2440).